We begin with the raw amino-acid sequence, 203 residues long: Short chain dehydrogenase/reductase dpmpH (203 aa).

NADP(+) contacts are provided by Asp-23, Tyr-77, and Lys-81. Tyr-77 functions as the Proton acceptor in the catalytic mechanism. The Lowers pKa of active site Tyr role is filled by Lys-81.

This sequence belongs to the short-chain dehydrogenases/reductases (SDR) family.

It functions in the pathway secondary metabolite biosynthesis; terpenoid biosynthesis. Short chain dehydrogenase/reductase; part of the gene cluster that mediates the biosynthesis of diterpenoid pyrones. The first step of the pathway is the synthesis of the alpha-pyrone moiety by the polyketide synthase dpmpA via condensation of one acetyl-CoA starter unit with 3 malonyl-CoA units and 2 methylations. The alpha-pyrone is then combined with geranylgeranyl pyrophosphate (GGPP) formed by the GGPP synthase dpmpD through the action of the prenyltransferase dpmpC to yield a linear alpha-pyrone diterpenoid. Subsequent steps in the diterpenoid pyrone biosynthetic pathway involve the decalin core formation, which is initiated by the epoxidation of the C10-C11 olefin by the FAD-dependent oxidoreductase dpmpE, and is followed by a cyclization cascade catalyzed by the terpene cyclase dpmpB. The short chain dehydrogenase/reductase dpmpG then oxidizes the 8S hydroxy group to a ketone and the short chain dehydrogenase/reductase dpmpH reduces the ketone to the 8R hydroxy group to yield higginsianin B. Higginsianin B is further methylated by the methyltransferase dpmpI to produce the intermediate named FDDP B. The cytochrome P450 monooxygenase dpmpJ then oxidizes the C-26 methyl to primary alcohol, producing the final diterpenoid pyrone with a C-26 primary alcohol on the gamma-pyrone moiety named FDDP C. This Macrophomina phaseolina (strain MS6) (Charcoal rot fungus) protein is Short chain dehydrogenase/reductase dpmpH.